A 273-amino-acid polypeptide reads, in one-letter code: Large ribosomal subunit protein uL2cz/uL2cy (273 aa).

2 disordered regions span residues 1-20 (MAIH…AVDS) and 224-254 (NPVD…PALG).

It belongs to the universal ribosomal protein uL2 family. As to quaternary structure, part of the 50S ribosomal subunit.

It is found in the plastid. It localises to the chloroplast. The polypeptide is Large ribosomal subunit protein uL2cz/uL2cy (rpl2-A) (Nuphar advena (Common spatterdock)).